The following is a 329-amino-acid chain: Red chlorophyll catabolite reductase 1, chloroplastic (329 aa).

Pro residues predominate over residues 1–11 (MLQLRSPPPAT). The transit peptide at 1–50 (MLQLRSPPPATSSPSSAVSFPTLAPRLLPLRRRRRGAGSQLGGKTSSAVR) directs the protein to the chloroplast. Residues 1–61 (MLQLRSPPPA…SSAAAPGATE (61 aa)) are disordered. Low complexity-rich tracts occupy residues 12–28 (SSPSSAVSFPTLAPRLL) and 46–59 (SSAVRASSAAAPGA). Residues E163, 216–218 (YRS), and D299 each bind red chlorophyll catabolite.

Expressed in leaves. Expressed at low levels in roots, stems, panicles and seeds.

The protein resides in the plastid. It is found in the chloroplast. The enzyme catalyses primary fluorescent chlorophyll catabolite + 2 oxidized [2Fe-2S]-[ferredoxin] = red chlorophyll catabolite + 2 reduced [2Fe-2S]-[ferredoxin] + 3 H(+). It functions in the pathway porphyrin-containing compound metabolism; chlorophyll degradation. Functionally, catalyzes the key reaction of chlorophyll catabolism, porphyrin macrocycle cleavage of pheophorbide a (pheide a) to a primary fluorescent catabolite (pFCC). Works in a two-step reaction with pheophorbide a oxygenase (PaO) by reducing the C20/C1 double bond of the intermediate, RCC. Belongs to the chlorophyll catabolic enzymes (CCEs). May play a role in senescence and response to wounding. In Oryza sativa subsp. japonica (Rice), this protein is Red chlorophyll catabolite reductase 1, chloroplastic.